Consider the following 348-residue polypeptide: Histone PARylation factor 1 (348 aa).

The segment covering 1-10 (MAGRGKRKPR) has biased composition (basic residues). The interval 1–38 (MAGRGKRKPRSLPQTETPNGEVKKAKEGLKDDKTSVGE) is disordered. The span at 21 to 38 (EVKKAKEGLKDDKTSVGE) shows a compositional bias: basic and acidic residues. The stretch at 170-200 (LQKKKKEKRQQKDDAALNRLEEDLKREAERL) forms a coiled coil. Glu-285 serves as the catalytic Proton donor.

It belongs to the HPF1 family. In terms of assembly, interacts with PARP1 (via the PARP catalytic domain). Interacts with PARP2 (via the PARP catalytic domain). Interacts with core nucleosomes in a parp1- and parp2-dependent manner. As to expression, in adult, mainly expressed in gonads.

It localises to the chromosome. The protein localises to the nucleus. Functionally, cofactor for serine ADP-ribosylation that confers serine specificity on parp1 and parp2 and plays a key role in DNA damage response. Initiates the repair of double-strand DNA breaks: recruited to DNA damage sites by parp1 and parp2 and switches the amino acid specificity of parp1 and parp2 from aspartate or glutamate to serine residues, licensing serine ADP-ribosylation of target proteins. Serine ADP-ribosylation of target proteins, such as histones, promotes decompaction of chromatin and the recruitment of repair factors leading to the reparation of DNA strand breaks. Serine ADP-ribosylation of proteins constitutes the primary form of ADP-ribosylation of proteins in response to DNA damage. Hpf1 acts by completing the active site of parp1 and parp2: forms a composite active site composed of residues from Hpf1 and parp1 or parp2. While hpf1 promotes the initiation of serine ADP-ribosylation, it restricts the polymerase activity of parp1 and parp2 in order to limit the length of poly-ADP-ribose chains. Hpf1 also promotes tyrosine ADP-ribosylation, probably by conferring tyrosine specificity on parp1. The chain is Histone PARylation factor 1 from Danio rerio (Zebrafish).